The primary structure comprises 254 residues: MPEGDGVPRETPSPSVVPESPVEVPVEAVARVFGDRADRAATYRELLATAGVERGLIGPREVPRLWDRHLLNCAYLGEVIDQGSSVIDLGSGAGLPGIPLALARPDLQIRLVEPLERRYTFLREAITELGLRDQVAVARGRAEDVRGEFSASVVTARAVAPLKTLYGWALPLVVTGGHLVAIKGRSASDEIAAAGETLRQMGVTAAPEVLSVGPDDGTGTTVVRVARGHGPLRAATAPAPPGAAKRRPGKGNRR.

Residues 1–21 (MPEGDGVPRETPSPSVVPESP) form a disordered region. The span at 9 to 21 (RETPSPSVVPESP) shows a compositional bias: low complexity. Residues Gly-90, Leu-95, 142–143 (AE), and Arg-157 contribute to the S-adenosyl-L-methionine site. The interval 230 to 254 (GPLRAATAPAPPGAAKRRPGKGNRR) is disordered. Over residues 244–254 (AKRRPGKGNRR) the composition is skewed to basic residues.

This sequence belongs to the methyltransferase superfamily. RNA methyltransferase RsmG family.

Its subcellular location is the cytoplasm. In terms of biological role, specifically methylates the N7 position of guanine in position 518 of 16S rRNA. The chain is Ribosomal RNA small subunit methyltransferase G from Kineococcus radiotolerans (strain ATCC BAA-149 / DSM 14245 / SRS30216).